Here is a 212-residue protein sequence, read N- to C-terminus: Interleukin-6 (212 aa).

The N-terminal stretch at 1–29 is a signal peptide; sequence MNSFSTSAFGPVAFSLGLLLVLPAAFPAP. A disulfide bond links Cys72 and Cys78. The N-linked (GlcNAc...) asparagine glycan is linked to Asn73. Ser81 carries the post-translational modification Phosphoserine; by FAM20C. An intrachain disulfide couples Cys101 to Cys111.

This sequence belongs to the IL-6 superfamily. Component of a hexamer of two molecules each of IL6, IL6R and IL6ST; first binds to IL6R to associate with the signaling subunit IL6ST. Interacts with IL6R (via the N-terminal ectodomain); this interaction may be affected by IL6R-binding with SORL1, hence decreasing IL6 cis signaling. Interacts with SORL1 (via the N-terminal ectodomain); this interaction leads to IL6 internalization and lysosomal degradation. May form a trimeric complex with the soluble SORL1 ectodomain and soluble IL6R receptor; this interaction might stabilize circulating IL6, hence promoting IL6 trans signaling. In terms of processing, N- and O-glycosylated. As to expression, produced by skeletal muscle.

The protein localises to the secreted. Its function is as follows. Cytokine with a wide variety of biological functions in immunity, tissue regeneration, and metabolism. Binds to IL6R, then the complex associates to the signaling subunit IL6ST/gp130 to trigger the intracellular IL6-signaling pathway. The interaction with the membrane-bound IL6R and IL6ST stimulates 'classic signaling', whereas the binding of IL6 and soluble IL6R to IL6ST stimulates 'trans-signaling'. Alternatively, 'cluster signaling' occurs when membrane-bound IL6:IL6R complexes on transmitter cells activate IL6ST receptors on neighboring receiver cells. Functionally, IL6 is a potent inducer of the acute phase response. Rapid production of IL6 contributes to host defense during infection and tissue injury, but excessive IL6 synthesis is involved in disease pathology. In the innate immune response, is synthesized by myeloid cells, such as macrophages and dendritic cells, upon recognition of pathogens through toll-like receptors (TLRs) at the site of infection or tissue injury. In the adaptive immune response, is required for the differentiation of B cells into immunoglobulin-secreting cells. Plays a major role in the differentiation of CD4(+) T cell subsets. Essential factor for the development of T follicular helper (Tfh) cells that are required for the induction of germinal-center formation. Required to drive naive CD4(+) T cells to the Th17 lineage. Also required for proliferation of myeloma cells and the survival of plasmablast cells. Acts as an essential factor in bone homeostasis and on vessels directly or indirectly by induction of VEGF, resulting in increased angiogenesis activity and vascular permeability. Induces, through 'trans-signaling' and synergistically with IL1B and TNF, the production of VEGF. Involved in metabolic controls, is discharged into the bloodstream after muscle contraction increasing lipolysis and improving insulin resistance. 'Trans-signaling' in central nervous system also regulates energy and glucose homeostasis. Mediates, through GLP-1, crosstalk between insulin-sensitive tissues, intestinal L cells and pancreatic islets to adapt to changes in insulin demand. Also acts as a myokine. Plays a protective role during liver injury, being required for maintenance of tissue regeneration. Also has a pivotal role in iron metabolism by regulating HAMP/hepcidin expression upon inflammation or bacterial infection. Through activation of IL6ST-YAP-NOTCH pathway, induces inflammation-induced epithelial regeneration. The chain is Interleukin-6 from Homo sapiens (Human).